The following is a 283-amino-acid chain: Elongation factor Ts (283 aa).

Residues 80–83 (TDFV) are involved in Mg(2+) ion dislocation from EF-Tu.

Belongs to the EF-Ts family.

It localises to the cytoplasm. Functionally, associates with the EF-Tu.GDP complex and induces the exchange of GDP to GTP. It remains bound to the aminoacyl-tRNA.EF-Tu.GTP complex up to the GTP hydrolysis stage on the ribosome. The sequence is that of Elongation factor Ts from Pectobacterium carotovorum subsp. carotovorum (strain PC1).